Reading from the N-terminus, the 294-residue chain is Foldase protein PrsA 1 (294 aa).

The N-terminal stretch at 1–21 (MTKLKKVMISVIAATLLLLAG) is a signal peptide. A lipid anchor (N-palmitoyl cysteine) is attached at cysteine 22. A lipid anchor (S-diacylglycerol cysteine) is attached at cysteine 22. Positions 135–226 (EPDITVRHIL…YGYHLIQLVK (92 aa)) constitute a PpiC domain.

This sequence belongs to the PrsA family.

It is found in the cell membrane. The enzyme catalyses [protein]-peptidylproline (omega=180) = [protein]-peptidylproline (omega=0). In terms of biological role, plays a major role in protein secretion by helping the post-translocational extracellular folding of several secreted proteins. The chain is Foldase protein PrsA 1 (prsA1) from Listeria monocytogenes serovar 1/2a (strain ATCC BAA-679 / EGD-e).